A 170-amino-acid polypeptide reads, in one-letter code: Endoribonuclease YbeY (170 aa).

Zn(2+) is bound by residues histidine 118, histidine 122, and histidine 128.

The protein belongs to the endoribonuclease YbeY family. It depends on Zn(2+) as a cofactor.

The protein resides in the cytoplasm. In terms of biological role, single strand-specific metallo-endoribonuclease involved in late-stage 70S ribosome quality control and in maturation of the 3' terminus of the 16S rRNA. In Mycobacteroides abscessus (strain ATCC 19977 / DSM 44196 / CCUG 20993 / CIP 104536 / JCM 13569 / NCTC 13031 / TMC 1543 / L948) (Mycobacterium abscessus), this protein is Endoribonuclease YbeY.